The primary structure comprises 534 residues: Cytochrome c oxidase subunit 1 (534 aa).

Residues 16-36 (VLYFIFSVFCGMAGTGMSMII) form a helical membrane-spanning segment. The Ca(2+) site is built by E39 and G44. Fe(II)-heme a is bound at residue H62. 6 consecutive transmembrane segments (helical) span residues 64–84 (ILMV…NYLL), 101–121 (ISFW…LVES), 147–167 (AIFA…NFIV), 183–203 (PLFV…LPVL), 235–255 (LFWF…FGVI), and 267–287 (VFGE…GFLV). H241 serves as a coordination point for Cu cation. The segment at residues 241 to 245 (HPEVY) is a cross-link (1'-histidyl-3'-tyrosine (His-Tyr)). O2 is bound at residue Y245. Cu cation-binding residues include H290 and H291. Transmembrane regions (helical) follow at residues 310–330 (MIIA…IYGG) and 338–358 (MMYA…GVAL). Residues H368 and D369 each contribute to the Mg(2+) site. A run of 2 helical transmembrane segments spans residues 372–392 (YVVA…MFAG) and 414–434 (FWLI…LGIN). A heme a3-binding site is contributed by H376. H378 is a Fe(II)-heme a binding site. P441 contacts Ca(2+). The chain crosses the membrane as a helical span at residues 453 to 473 (VSSIGSFIAMISLILFIYILF).

This sequence belongs to the heme-copper respiratory oxidase family. As to quaternary structure, component of the cytochrome c oxidase (complex IV, CIV), a multisubunit enzyme composed of a catalytic core of 3 subunits and several supernumerary subunits. The complex exists as a monomer or a dimer and forms supercomplexes (SCs) in the inner mitochondrial membrane with ubiquinol-cytochrome c oxidoreductase (cytochrome b-c1 complex, complex III, CIII). Requires heme as cofactor. Cu cation serves as cofactor.

It localises to the mitochondrion inner membrane. The catalysed reaction is 4 Fe(II)-[cytochrome c] + O2 + 8 H(+)(in) = 4 Fe(III)-[cytochrome c] + 2 H2O + 4 H(+)(out). It participates in energy metabolism; oxidative phosphorylation. Component of the cytochrome c oxidase, the last enzyme in the mitochondrial electron transport chain which drives oxidative phosphorylation. The respiratory chain contains 3 multisubunit complexes succinate dehydrogenase (complex II, CII), ubiquinol-cytochrome c oxidoreductase (cytochrome b-c1 complex, complex III, CIII) and cytochrome c oxidase (complex IV, CIV), that cooperate to transfer electrons derived from NADH and succinate to molecular oxygen, creating an electrochemical gradient over the inner membrane that drives transmembrane transport and the ATP synthase. Cytochrome c oxidase is the component of the respiratory chain that catalyzes the reduction of oxygen to water. Electrons originating from reduced cytochrome c in the intermembrane space (IMS) are transferred via the dinuclear copper A center (CU(A)) of subunit 2 and heme A of subunit 1 to the active site in subunit 1, a binuclear center (BNC) formed by heme A3 and copper B (CU(B)). The BNC reduces molecular oxygen to 2 water molecules using 4 electrons from cytochrome c in the IMS and 4 protons from the mitochondrial matrix. In Vanderwaltozyma polyspora (strain ATCC 22028 / DSM 70294 / BCRC 21397 / CBS 2163 / NBRC 10782 / NRRL Y-8283 / UCD 57-17) (Kluyveromyces polysporus), this protein is Cytochrome c oxidase subunit 1 (COX1).